Consider the following 430-residue polypeptide: Adenylosuccinate synthetase (430 aa).

GTP contacts are provided by residues 12-18 (GDEGKGK) and 40-42 (GHT). The active-site Proton acceptor is the Asp13. Asp13 and Gly40 together coordinate Mg(2+). IMP-binding positions include 13-16 (DEGK), 38-41 (NAGH), Thr128, Arg142, Gln223, Thr238, and Arg302. His41 acts as the Proton donor in catalysis. 298–304 (TTTGRPR) is a substrate binding site. GTP is bound by residues Arg304, 330–332 (SID), and 412–414 (SVG).

The protein belongs to the adenylosuccinate synthetase family. Homodimer. Mg(2+) serves as cofactor.

It is found in the cytoplasm. The catalysed reaction is IMP + L-aspartate + GTP = N(6)-(1,2-dicarboxyethyl)-AMP + GDP + phosphate + 2 H(+). Its pathway is purine metabolism; AMP biosynthesis via de novo pathway; AMP from IMP: step 1/2. In terms of biological role, plays an important role in the de novo pathway of purine nucleotide biosynthesis. Catalyzes the first committed step in the biosynthesis of AMP from IMP. The sequence is that of Adenylosuccinate synthetase from Streptococcus pyogenes serotype M2 (strain MGAS10270).